The following is a 273-amino-acid chain: Tyrosinase (273 aa).

A signal peptide spans 1-18 (MCLLALGFLLGILQPASG). N-linked (GlcNAc...) asparagine glycosylation is found at N86 and N169. Cu cation-binding residues include H180, H202, and H211. A glycan (N-linked (GlcNAc...) asparagine) is linked at N230.

The protein belongs to the tyrosinase family. Cu(2+) is required as a cofactor.

The protein resides in the melanosome membrane. It catalyses the reaction 2 L-dopa + O2 = 2 L-dopaquinone + 2 H2O. The catalysed reaction is L-tyrosine + O2 = L-dopaquinone + H2O. In terms of biological role, this is a copper-containing oxidase that functions in the formation of pigments such as melanins and other polyphenolic compounds. This is Tyrosinase (TYR) from Pelodiscus sinensis (Chinese softshell turtle).